A 126-amino-acid chain; its full sequence is Ribonuclease P protein component (126 aa).

It belongs to the RnpA family. In terms of assembly, consists of a catalytic RNA component (M1 or rnpB) and a protein subunit.

It carries out the reaction Endonucleolytic cleavage of RNA, removing 5'-extranucleotides from tRNA precursor.. In terms of biological role, RNaseP catalyzes the removal of the 5'-leader sequence from pre-tRNA to produce the mature 5'-terminus. It can also cleave other RNA substrates such as 4.5S RNA. The protein component plays an auxiliary but essential role in vivo by binding to the 5'-leader sequence and broadening the substrate specificity of the ribozyme. This chain is Ribonuclease P protein component, found in Synechococcus sp. (strain JA-3-3Ab) (Cyanobacteria bacterium Yellowstone A-Prime).